Here is a 912-residue protein sequence, read N- to C-terminus: MGDSRDLCPHLDSIGEVTKEDLLLKSKSTCQSCGVSGPNLWACLQVSCSYVGCGESFADHSTLHAQAKKHNLTVNLTTFRVWCYACEKEVFLEPRLAAHPPGPAPKFSEQDSPPPSHPLKAVPIAVADEGESESEDDDLKPRGLTGMKNLGNSCYMNAALQALSNCPPLTQFFLECGGLVRTDKKPALCKSYQKLVSEVWHRKRPSYVVPTSLSHGIKLVNPMFRGYAQQDTQEFLRCLMDQLHEELKEPVVATAAALTEARDSDSSDTDEKREGDRSPSEDEFLSCDSSSDRGEGDGQGRSGGGSQAEAELLMADEAGRAISEKERMKDRKFSWGQQRTNSEQVDEDADVDTAMAALEQQPPETQPPSPRSTSPCRTPEPDNEAHMRSSRPCSPVHHHEGHAKLASSPHRASPVRMGPAYVLKKAQVPGSRRRKEQSYRSVISDIFDGSVLSLVQCLTCDRVSTTVETFQDLSLPIPGKEDLAKLHSAIYQNVPAKPGACGDSYVAQGWLAFIVEYIRRFVVSCTPSWFWGPVVTLEDCLAAFFAADELKGDNMYSCERCKKLRNGVKYCKVLRLPEILCIHLKRFRHEVMYSFKISSHVSFPLEGLDLRPFLAKECTSQITTYDLLSVICHHGTAGSGHYIAYCQNVINGQWYEFDDQYVTEVHETVVQNAEAYVLFYRKSSEEAVRERQQVVSLAAMREPSLLRFYVSREWLNKFNTFAEPGPITNHTFLCSHGGIPPNKYHYIDDLVVILPQNVWEHLYSRFGGGPAVNHLYVCSICQVEIEALAKRRRVEIDTFIKLNKAFQAEESPSVIYCISMQWFREWEAFVKGKDNEPPGPIDNSRIAQVKGSGHIQLKPGADYGQISEETWVYLNNLYGGGPEIAIRQSVAQLPDPESLHGEQKIEAETRAL.

Residues 6–111 form a UBP-type zinc finger; that stretch reads DLCPHLDSIG…GPAPKFSEQD (106 aa). Residues cysteine 8, histidine 10, cysteine 30, cysteine 33, cysteine 43, cysteine 48, cysteine 53, histidine 60, histidine 64, histidine 70, cysteine 83, and cysteine 86 each contribute to the Zn(2+) site. Positions 101 to 120 are disordered; sequence PGPAPKFSEQDSPPPSHPLK. Residues serine 112, serine 132, and serine 134 each carry the phosphoserine modification. Residues 145 to 683 enclose the USP domain; it reads TGMKNLGNSC…EAYVLFYRKS (539 aa). Cysteine 154 acts as the Nucleophile in catalysis. Disordered stretches follow at residues 258-308 and 322-415; these read LTEA…GSQA and ISEK…ASPV. At threonine 259 the chain carries Phosphothreonine. Residues 260-280 are compositionally biased toward basic and acidic residues; that stretch reads EARDSDSSDTDEKREGDRSPS. A Phosphoserine modification is found at serine 306. The segment covering 322-333 has biased composition (basic and acidic residues); the sequence is ISEKERMKDRKF. Serine 369 is modified (phosphoserine). The residue at position 378 (threonine 378) is a Phosphothreonine. Phosphoserine occurs at positions 408 and 413. Residue histidine 641 is the Proton acceptor of the active site. 2 DUSP domains span residues 685-778 and 787-890; these read EEAV…LYVC and ALAK…RQSV.

The protein belongs to the peptidase C19 family. USP20/USP33 subfamily. As to quaternary structure, interacts with VHL, leading to its ubiquitination and subsequent degradation. Interacts with CCP110. Interacts with DIO2. Interacts with HIF1A. Interacts with ADRB2. Interacts with USP18. Ubiquitinated via a VHL-dependent pathway for proteasomal degradation.

The protein resides in the cytoplasm. It localises to the endoplasmic reticulum. It is found in the perinuclear region. Its subcellular location is the cytoskeleton. The protein localises to the microtubule organizing center. The protein resides in the centrosome. It catalyses the reaction Thiol-dependent hydrolysis of ester, thioester, amide, peptide and isopeptide bonds formed by the C-terminal Gly of ubiquitin (a 76-residue protein attached to proteins as an intracellular targeting signal).. Deubiquitinating enzyme that plays a role in many cellular processes including autophagy, cellular antiviral response or membrane protein biogenesis. Attenuates TLR4-mediated NF-kappa-B signaling by cooperating with beta-arrestin-2/ARRB2 and inhibiting TRAF6 autoubiquitination. Promotes cellular antiviral responses by deconjugating 'Lys-33' and 'Lys-48'-linked ubiquitination of STING1 leading to its stabilization. Plays an essential role in autophagy induction by regulating the ULK1 stability through deubiquitination of ULK1. Acts as a positive regulator for NF-kappa-B activation by TNF-alpha through deubiquitinating 'Lys-48'-linked polyubiquitination of SQSTM1, leading to its increased stability. Acts as a regulator of G-protein coupled receptor (GPCR) signaling by mediating the deubiquitination beta-2 adrenergic receptor (ADRB2). Plays a central role in ADRB2 recycling and resensitization after prolonged agonist stimulation by constitutively binding ADRB2, mediating deubiquitination of ADRB2 and inhibiting lysosomal trafficking of ADRB2. Upon dissociation, it is probably transferred to the translocated beta-arrestins, possibly leading to beta-arrestins deubiquitination and disengagement from ADRB2. This suggests the existence of a dynamic exchange between the ADRB2 and beta-arrestins. Deubiquitinates DIO2, thereby regulating thyroid hormone regulation. Deubiquitinates HIF1A, leading to stabilize HIF1A and enhance HIF1A-mediated activity. Deubiquitinates MCL1, a pivotal member of the anti-apoptotic Bcl-2 protein family to regulate its stability. Within the endoplasmic reticulum, participates with USP33 in the rescue of post-translationally targeted membrane proteins that are inappropriately ubiquitinated by the cytosolic protein quality control in the cytosol. The sequence is that of Ubiquitin carboxyl-terminal hydrolase 20 (USP20) from Bos taurus (Bovine).